The primary structure comprises 232 residues: 7-cyano-7-deazaguanine synthase 1 (232 aa).

7–17 (CSGGLDSVSLA) is an ATP binding site. Zn(2+) contacts are provided by Cys185, Cys193, Cys196, and Cys199.

It belongs to the QueC family. Zn(2+) is required as a cofactor.

The catalysed reaction is 7-carboxy-7-deazaguanine + NH4(+) + ATP = 7-cyano-7-deazaguanine + ADP + phosphate + H2O + H(+). Its pathway is purine metabolism; 7-cyano-7-deazaguanine biosynthesis. Its function is as follows. Catalyzes the ATP-dependent conversion of 7-carboxy-7-deazaguanine (CDG) to 7-cyano-7-deazaguanine (preQ(0)). This is 7-cyano-7-deazaguanine synthase 1 from Mesorhizobium japonicum (strain LMG 29417 / CECT 9101 / MAFF 303099) (Mesorhizobium loti (strain MAFF 303099)).